We begin with the raw amino-acid sequence, 201 residues long: Cold shock domain-containing protein 4 (201 aa).

At S2 the chain carries N-acetylserine. In terms of domain architecture, CSD spans 14–81 (RRKGTVKWFD…RPKAIEVSGP (68 aa)). A disordered region spans residues 66–109 (EVDNSGRPKAIEVSGPDGAPVQGNSGGGGSSGGRGGFGGGGGRG). The span at 89–109 (NSGGGGSSGGRGGFGGGGGRG) shows a compositional bias: gly residues. CCHC-type zinc fingers lie at residues 136-153 (NSCF…ECSQ) and 180-197 (LSCY…DCTS).

Belongs to the cold shock protein (CSP) family. In terms of tissue distribution, mostly expressed in shoot apices and siliques, and, to a lower extent, in roots, cotyledons, stems, shoots, leaves, floral buds and flowers. Present in shoot apical meristems and siliques (at protein level). Very low levels are observed in cv. Landsberg erecta compared to cv. Columbia.

It is found in the cytoplasm. The protein localises to the nucleus. The protein resides in the nucleolus. Functionally, chaperone that binds to and unwinds RNA and both single-stranded DNA and double-stranded DNA (ssDNA and dsDNA DNA). Regulates the flowering transition and flower and seed development, particularly at late stages of embryo development, through regulation of gene expression (including MEA, FIS2, AP1, CAL, AG and SHP2). The sequence is that of Cold shock domain-containing protein 4 (CSP4) from Arabidopsis thaliana (Mouse-ear cress).